The following is a 289-amino-acid chain: UDP-3-O-acyl-N-acetylglucosamine deacetylase (289 aa).

Histidine 79, histidine 236, and aspartate 240 together coordinate Zn(2+). Catalysis depends on histidine 263, which acts as the Proton donor.

Belongs to the LpxC family. Zn(2+) serves as cofactor.

It carries out the reaction a UDP-3-O-[(3R)-3-hydroxyacyl]-N-acetyl-alpha-D-glucosamine + H2O = a UDP-3-O-[(3R)-3-hydroxyacyl]-alpha-D-glucosamine + acetate. It functions in the pathway glycolipid biosynthesis; lipid IV(A) biosynthesis; lipid IV(A) from (3R)-3-hydroxytetradecanoyl-[acyl-carrier-protein] and UDP-N-acetyl-alpha-D-glucosamine: step 2/6. Functionally, catalyzes the hydrolysis of UDP-3-O-myristoyl-N-acetylglucosamine to form UDP-3-O-myristoylglucosamine and acetate, the committed step in lipid A biosynthesis. This chain is UDP-3-O-acyl-N-acetylglucosamine deacetylase, found in Rickettsia typhi (strain ATCC VR-144 / Wilmington).